The primary structure comprises 182 residues: Large ribosomal subunit protein uL16 (182 aa).

The tract at residues E140–S182 is disordered. The span at T162–S176 shows a compositional bias: low complexity.

This sequence belongs to the universal ribosomal protein uL16 family. In terms of assembly, part of the 50S ribosomal subunit.

Its function is as follows. Binds 23S rRNA and is also seen to make contacts with the A and possibly P site tRNAs. In Prochlorococcus marinus (strain SARG / CCMP1375 / SS120), this protein is Large ribosomal subunit protein uL16.